Here is a 395-residue protein sequence, read N- to C-terminus: Chalcone synthase (395 aa).

Cysteine 169 is a catalytic residue.

Belongs to the thiolase-like superfamily. Chalcone/stilbene synthases family.

It catalyses the reaction (E)-4-coumaroyl-CoA + 3 malonyl-CoA + 3 H(+) = 2',4,4',6'-tetrahydroxychalcone + 3 CO2 + 4 CoA. Its pathway is secondary metabolite biosynthesis; flavonoid biosynthesis. Functionally, the primary product of this enzyme is 4,2',4',6'-tetrahydroxychalcone (also termed naringenin-chalcone or chalcone) which can under specific conditions spontaneously isomerize into naringenin. In Pinus strobus (Eastern white pine), this protein is Chalcone synthase (CHS).